The chain runs to 145 residues: Synaptojanin-2-binding protein (145 aa).

Over 1 to 117 the chain is Cytoplasmic; it reads MNGRVDYLVT…GHRGEGDPSG (117 aa). Residues 13–100 enclose the PDZ domain; that stretch reads EINLTRGPSG…AVSLRVQHRL (88 aa). The chain crosses the membrane as a helical span at residues 118–138; sequence IPIFMVLVPVFALTMVAAWAF. The Mitochondrial intermembrane segment spans residues 139–145; that stretch reads MRYRQQL.

As to quaternary structure, binds (via the PDZ domain) to isoform 2A of SYNJ2 (via the unique motif in the C-terminus). Interacts (via C-terminus) with RALBP1. Interacts (via PDZ domain) with ACVR2A (via C-terminus) and ACVR2B (via C-terminus). Forms a ternary complex with ACVR2A and RALBP1. Interacts with MAPK12. Interacts with DLL1; enhances DLL1 protein stability, and promotes notch signaling in endothelial cells.

It localises to the mitochondrion outer membrane. In terms of biological role, regulates endocytosis of activin type 2 receptor kinases through the Ral/RALBP1-dependent pathway and may be involved in suppression of activin-induced signal transduction. In Homo sapiens (Human), this protein is Synaptojanin-2-binding protein (SYNJ2BP).